The following is a 427-amino-acid chain: Protein TIFY 6a (427 aa).

Basic and acidic residues predominate over residues 1 to 25 (MERDFLGAIGRKEEAAGKPEEHSDY). The segment at 1 to 33 (MERDFLGAIGRKEEAAGKPEEHSDYRGGGGGAS) is disordered. The Tify domain occupies 196–231 (QNPKVTQMTIFYDGLVNVFDNIPVEKAQELMLLASR). Composition is skewed to polar residues over residues 293–303 (LPKSSSSSNDS) and 317–327 (PLSQASPSQPI). Positions 293 to 327 (LPKSSSSSNDSAGPKSGGLPLAVTPLSQASPSQPI) are disordered. The Jas signature appears at 343 to 367 (PQARKASLARFLEKRKERVSSVAPY). The Nuclear localization signal motif lies at 345-352 (ARKASLAR). Positions 360-427 (RVSSVAPYPS…QEPPSTKLQI (68 aa)) are disordered. Composition is skewed to polar residues over residues 369-402 (SSKS…NNCE) and 411-427 (RNIS…KLQI).

This sequence belongs to the TIFY/JAZ family. Ubiquitinated.

The protein resides in the nucleus. In terms of biological role, repressor of jasmonate responses. The chain is Protein TIFY 6a from Oryza sativa subsp. indica (Rice).